The chain runs to 438 residues: GTPase Obg (438 aa).

The 159-residue stretch at M1–I159 folds into the Obg domain. One can recognise an OBG-type G domain in the interval A160–P332. Residues G166 to S173, F191 to S195, D219 to G222, N285 to E288, and S313 to K315 each bind ATP. 2 residues coordinate Mg(2+): S173 and T193. In terms of domain architecture, OCT spans I357 to D435.

It belongs to the TRAFAC class OBG-HflX-like GTPase superfamily. OBG GTPase family. As to quaternary structure, monomer. It depends on Mg(2+) as a cofactor.

It localises to the cytoplasm. Its function is as follows. An essential GTPase which binds GTP, GDP and possibly (p)ppGpp with moderate affinity, with high nucleotide exchange rates and a fairly low GTP hydrolysis rate. Plays a role in control of the cell cycle, stress response, ribosome biogenesis and in those bacteria that undergo differentiation, in morphogenesis control. In Deinococcus radiodurans (strain ATCC 13939 / DSM 20539 / JCM 16871 / CCUG 27074 / LMG 4051 / NBRC 15346 / NCIMB 9279 / VKM B-1422 / R1), this protein is GTPase Obg.